Here is a 118-residue protein sequence, read N- to C-terminus: Large ribosomal subunit protein bL20 (118 aa).

Belongs to the bacterial ribosomal protein bL20 family.

Its function is as follows. Binds directly to 23S ribosomal RNA and is necessary for the in vitro assembly process of the 50S ribosomal subunit. It is not involved in the protein synthesizing functions of that subunit. This chain is Large ribosomal subunit protein bL20, found in Hydrogenovibrio crunogenus (strain DSM 25203 / XCL-2) (Thiomicrospira crunogena).